The following is a 288-amino-acid chain: Hypersensitive-induced response protein-like protein 1 (288 aa).

The N-myristoyl glycine moiety is linked to residue Gly2.

Positive regulator of hypersensitive response (HR)-like cell death. May be involved in potassium ion channel regulation. This Oryza sativa subsp. japonica (Rice) protein is Hypersensitive-induced response protein-like protein 1.